The chain runs to 546 residues: Probable lysosomal cobalamin transporter (546 aa).

A run of 4 helical transmembrane segments spans residues 8–28, 48–68, 102–122, and 141–161; these read LAQGWIPFTVVVVLAILFSWF, IIALFIALMTTALVPVDIFLV, ILYALLAFFVFVIIPFMYFFF, and YSIGFLIVASVLLLVGAFAPL. An N-linked (GlcNAc...) asparagine glycan is attached at N167. 4 helical membrane passes run 189 to 209, 304 to 324, 352 to 372, and 407 to 427; these read TALSLLIGFLTLIGMLIMITY, MVFGAFFLLVALLIFVSLFIT, IIMVYAQIVFPLDYCLFLLVV, and ALLFMCVMLMLIVLSLNVMLF. 3 N-linked (GlcNAc...) asparagine glycosylation sites follow: N444, N452, and N459. The chain crosses the membrane as a helical span at residues 495–515; the sequence is VWFFGACYYWGTWLFLVVFMT.

It belongs to the LIMR family. LMBRD1 subfamily.

It is found in the lysosome membrane. Functionally, probable lysosomal cobalamin transporter. Required to export cobalamin from lysosomes allowing its conversion to cofactors. In Nematostella vectensis (Starlet sea anemone), this protein is Probable lysosomal cobalamin transporter.